A 339-amino-acid polypeptide reads, in one-letter code: Dihydroorotate dehydrogenase (quinone) (339 aa).

FMN contacts are provided by residues 62–66 (AGMDK) and threonine 86. Lysine 66 contacts substrate. 111–115 (NRMGF) lines the substrate pocket. FMN-binding residues include asparagine 139 and asparagine 172. Asparagine 172 contacts substrate. Serine 175 serves as the catalytic Nucleophile. Asparagine 177 provides a ligand contact to substrate. 2 residues coordinate FMN: lysine 217 and threonine 245. Position 246 to 247 (246 to 247 (NT)) interacts with substrate. Residues glycine 268, glycine 297, and 318 to 319 (YS) contribute to the FMN site.

This sequence belongs to the dihydroorotate dehydrogenase family. Type 2 subfamily. In terms of assembly, monomer. Requires FMN as cofactor.

It localises to the cell membrane. The enzyme catalyses (S)-dihydroorotate + a quinone = orotate + a quinol. It functions in the pathway pyrimidine metabolism; UMP biosynthesis via de novo pathway; orotate from (S)-dihydroorotate (quinone route): step 1/1. In terms of biological role, catalyzes the conversion of dihydroorotate to orotate with quinone as electron acceptor. This chain is Dihydroorotate dehydrogenase (quinone), found in Shewanella sediminis (strain HAW-EB3).